Consider the following 69-residue polypeptide: Alpha-conotoxin-like Tx1 (69 aa).

Residues 1–21 (MGMRMMFVVFLLVVLASTVVS) form the signal peptide. Residues 22 to 49 (STSGRRAFHGRNAAAKASGLVSLTDRRP) constitute a propeptide that is removed on maturation. Intrachain disulfides connect Cys-51–Cys-57 and Cys-52–Cys-65. The ser-Xaa-Pro motif, crucial for potent interaction with nAChR stretch occupies residues 53-55 (SDP). Position 66 is a glycine amide (Gly-66).

This sequence belongs to the conotoxin A superfamily. As to expression, expressed by the venom duct.

It is found in the secreted. Functionally, alpha-conotoxins act on postsynaptic membranes, they bind to the nicotinic acetylcholine receptors (nAChR) and thus inhibit them. This Conus textile (Cloth-of-gold cone) protein is Alpha-conotoxin-like Tx1.